The following is a 291-amino-acid chain: Acetyl-coenzyme A carboxylase carboxyl transferase subunit beta (291 aa).

The 263-residue stretch at Ile29–Asn291 folds into the CoA carboxyltransferase N-terminal domain. Residues Cys33, Cys36, Cys52, and Cys55 each coordinate Zn(2+). The C4-type zinc-finger motif lies at Cys33–Cys55.

This sequence belongs to the AccD/PCCB family. As to quaternary structure, acetyl-CoA carboxylase is a heterohexamer composed of biotin carboxyl carrier protein (AccB), biotin carboxylase (AccC) and two subunits each of ACCase subunit alpha (AccA) and ACCase subunit beta (AccD). It depends on Zn(2+) as a cofactor.

It is found in the cytoplasm. The enzyme catalyses N(6)-carboxybiotinyl-L-lysyl-[protein] + acetyl-CoA = N(6)-biotinyl-L-lysyl-[protein] + malonyl-CoA. The protein operates within lipid metabolism; malonyl-CoA biosynthesis; malonyl-CoA from acetyl-CoA: step 1/1. In terms of biological role, component of the acetyl coenzyme A carboxylase (ACC) complex. Biotin carboxylase (BC) catalyzes the carboxylation of biotin on its carrier protein (BCCP) and then the CO(2) group is transferred by the transcarboxylase to acetyl-CoA to form malonyl-CoA. In Bacillus licheniformis (strain ATCC 14580 / DSM 13 / JCM 2505 / CCUG 7422 / NBRC 12200 / NCIMB 9375 / NCTC 10341 / NRRL NRS-1264 / Gibson 46), this protein is Acetyl-coenzyme A carboxylase carboxyl transferase subunit beta.